Here is a 158-residue protein sequence, read N- to C-terminus: SsrA-binding protein (158 aa).

Residues 135–158 are disordered; that stretch reads DKRKTLKDRDWERDKQRGFKKDLD. Residues 141–158 are compositionally biased toward basic and acidic residues; sequence KDRDWERDKQRGFKKDLD.

This sequence belongs to the SmpB family.

The protein resides in the cytoplasm. Its function is as follows. Required for rescue of stalled ribosomes mediated by trans-translation. Binds to transfer-messenger RNA (tmRNA), required for stable association of tmRNA with ribosomes. tmRNA and SmpB together mimic tRNA shape, replacing the anticodon stem-loop with SmpB. tmRNA is encoded by the ssrA gene; the 2 termini fold to resemble tRNA(Ala) and it encodes a 'tag peptide', a short internal open reading frame. During trans-translation Ala-aminoacylated tmRNA acts like a tRNA, entering the A-site of stalled ribosomes, displacing the stalled mRNA. The ribosome then switches to translate the ORF on the tmRNA; the nascent peptide is terminated with the 'tag peptide' encoded by the tmRNA and targeted for degradation. The ribosome is freed to recommence translation, which seems to be the essential function of trans-translation. This is SsrA-binding protein from Psychrobacter cryohalolentis (strain ATCC BAA-1226 / DSM 17306 / VKM B-2378 / K5).